The sequence spans 536 residues: Chaperonin GroEL 1 (536 aa).

ATP is bound by residues Thr-29–Pro-32, Asp-86–Thr-90, Gly-413, Asn-476–Ala-478, and Asp-492.

This sequence belongs to the chaperonin (HSP60) family. In terms of assembly, forms a cylinder of 14 subunits composed of two heptameric rings stacked back-to-back. Interacts with the co-chaperonin GroES.

The protein localises to the cytoplasm. The enzyme catalyses ATP + H2O + a folded polypeptide = ADP + phosphate + an unfolded polypeptide.. Its function is as follows. Together with its co-chaperonin GroES, plays an essential role in assisting protein folding. The GroEL-GroES system forms a nano-cage that allows encapsulation of the non-native substrate proteins and provides a physical environment optimized to promote and accelerate protein folding. The polypeptide is Chaperonin GroEL 1 (Nocardia farcinica (strain IFM 10152)).